The following is a 194-amino-acid chain: Adenylate kinase (194 aa).

10 to 15 contacts ATP; sequence GAGKGT. The tract at residues 30–59 is NMP; sequence STGDMLRAAVKAETEIGKKAKAVMDAGELV. Residues Thr31, Arg36, 57 to 59, 85 to 88, and Gln92 contribute to the AMP site; these read ELV and GYPR. The tract at residues 126-142 is LID; it reads KRAEDAQAAGQPVRRDD. Residue Arg127 participates in ATP binding. Positions 139 and 150 each coordinate AMP. ATP is bound at residue Ala178.

It belongs to the adenylate kinase family. As to quaternary structure, monomer.

It localises to the cytoplasm. It carries out the reaction AMP + ATP = 2 ADP. It participates in purine metabolism; AMP biosynthesis via salvage pathway; AMP from ADP: step 1/1. Its function is as follows. Catalyzes the reversible transfer of the terminal phosphate group between ATP and AMP. Plays an important role in cellular energy homeostasis and in adenine nucleotide metabolism. This chain is Adenylate kinase, found in Chelativorans sp. (strain BNC1).